The following is a 236-amino-acid chain: uncharacterized protein (236 aa).

The disordered stretch occupies residues 1–29 (MNNEKNKQDRENLNRQDERKSSEIKSERK).

This is an uncharacterized protein from Staphylococcus aureus.